Reading from the N-terminus, the 102-residue chain is Large ribosomal subunit protein bL21 (102 aa).

Belongs to the bacterial ribosomal protein bL21 family. Part of the 50S ribosomal subunit. Contacts protein L20.

This protein binds to 23S rRNA in the presence of protein L20. In Listeria innocua serovar 6a (strain ATCC BAA-680 / CLIP 11262), this protein is Large ribosomal subunit protein bL21.